The sequence spans 560 residues: DNA ligase B (560 aa).

The active-site N6-AMP-lysine intermediate is the K124.

This sequence belongs to the NAD-dependent DNA ligase family. LigB subfamily.

The enzyme catalyses NAD(+) + (deoxyribonucleotide)n-3'-hydroxyl + 5'-phospho-(deoxyribonucleotide)m = (deoxyribonucleotide)n+m + AMP + beta-nicotinamide D-nucleotide.. Catalyzes the formation of phosphodiester linkages between 5'-phosphoryl and 3'-hydroxyl groups in double-stranded DNA using NAD as a coenzyme and as the energy source for the reaction. This chain is DNA ligase B, found in Shigella flexneri.